The chain runs to 264 residues: Orotidine 5'-phosphate decarboxylase (264 aa).

Substrate contacts are provided by residues Asp-37, 59–61, 91–100, Tyr-217, and Arg-235; these read KTH and DRKFADIGNT. The active-site Proton donor is Lys-93.

It belongs to the OMP decarboxylase family.

The catalysed reaction is orotidine 5'-phosphate + H(+) = UMP + CO2. The protein operates within pyrimidine metabolism; UMP biosynthesis via de novo pathway; UMP from orotate: step 2/2. The chain is Orotidine 5'-phosphate decarboxylase (URA3) from Torulaspora delbrueckii (Yeast).